The primary structure comprises 416 residues: Serine/threonine-protein kinase 26 (416 aa).

The residue at position 2 (alanine 2) is an N-acetylalanine. Serine 4 bears the Phosphoserine mark. Residues 24 to 274 (FTKLERIGKG…AKELLKHKFI (251 aa)) form the Protein kinase domain. Residues 30-38 (IGKGSFGEV) and lysine 53 each bind ATP. Residue aspartate 144 is the Proton acceptor of the active site. Position 178 is a phosphothreonine; by autocatalysis (threonine 178). Residues 296–343 (AEGHSDEESDSEGSDSESSSRESNPHPEWSFTTVRKKPDPKKLQNGEE) form a disordered region. Residues serine 300, serine 304, serine 306, serine 309, and serine 325 each carry the phosphoserine modification. Threonine 327 and threonine 328 each carry phosphothreonine. Residues 331-340 (KKPDPKKLQN) show a composition bias toward basic and acidic residues.

The protein belongs to the protein kinase superfamily. STE Ser/Thr protein kinase family. STE20 subfamily. Homodimer. Interacts with PDCD10. Interacts with GOLGA2. Interacts with CTTNBP2NL. Interacts with RIPOR1 (via C-terminus); this interaction occurs in a PDCD10-dependent and Rho-independent manner. Interacts with PDCD10; this interaction is required for the association of STK26 with RIPOR1. Part of the core of STRIPAK complexes composed of PP2A catalytic and scaffolding subunits, the striatins (PP2A regulatory subunits), the striatin-associated proteins MOB4, STRIP1 and STRIP2, PDCD10 and members of the STE20 kinases, such as STK24 and STK26. The cofactor is Mg(2+).

The protein localises to the cytoplasm. Its subcellular location is the golgi apparatus. The catalysed reaction is L-seryl-[protein] + ATP = O-phospho-L-seryl-[protein] + ADP + H(+). It catalyses the reaction L-threonyl-[protein] + ATP = O-phospho-L-threonyl-[protein] + ADP + H(+). With respect to regulation, interaction with Golgi matrix protein GOLGA2 leads to autophosphorylation on Thr-178, possibly as a consequence of stabilization of dimer formation. May also be activated by C-terminal cleavage. Functionally, serine/threonine-protein kinase that acts as a mediator of cell growth. Modulates apoptosis. In association with STK24 negatively regulates Golgi reorientation in polarized cell migration upon RHO activation. Phosphorylates ATG4B at 'Ser-383', thereby increasing autophagic flux. Part of the striatin-interacting phosphatase and kinase (STRIPAK) complexes. STRIPAK complexes have critical roles in protein (de)phosphorylation and are regulators of multiple signaling pathways including Hippo, MAPK, nuclear receptor and cytoskeleton remodeling. Different types of STRIPAK complexes are involved in a variety of biological processes such as cell growth, differentiation, apoptosis, metabolism and immune regulation. This chain is Serine/threonine-protein kinase 26, found in Mus musculus (Mouse).